An 82-amino-acid chain; its full sequence is Fibroblast growth factor 8 (82 aa).

Asn-68 carries N-linked (GlcNAc...) asparagine glycosylation.

It belongs to the heparin-binding growth factors family. As to quaternary structure, monomer. Homodimer. Interacts with FGFR1, FGFR2, FGFR3 and FGFR4. Affinity between fibroblast growth factors (FGFs) and their receptors is increased by heparan sulfate glycosaminoglycans that function as coreceptors.

The protein resides in the secreted. Its function is as follows. Plays an important role in the regulation of embryonic development, cell proliferation, cell differentiation and cell migration. Required for normal brain, eye, ear and limb development during embryogenesis. Required for normal development of the gonadotropin-releasing hormone (GnRH) neuronal system. Plays a role in neurite outgrowth in hippocampal cells. The protein is Fibroblast growth factor 8 (FGF8) of Canis lupus familiaris (Dog).